Here is a 609-residue protein sequence, read N- to C-terminus: DNA-directed RNA polymerase subunit beta' (609 aa).

Zn(2+) contacts are provided by Cys-67, Cys-69, Cys-82, and Cys-85. Mg(2+) contacts are provided by Asp-460, Asp-462, and Asp-464.

Belongs to the RNA polymerase beta' chain family. RpoC1 subfamily. In plastids the minimal PEP RNA polymerase catalytic core is composed of four subunits: alpha, beta, beta', and beta''. When a (nuclear-encoded) sigma factor is associated with the core the holoenzyme is formed, which can initiate transcription. Requires Mg(2+) as cofactor. Zn(2+) is required as a cofactor.

It is found in the plastid. It localises to the chloroplast. It carries out the reaction RNA(n) + a ribonucleoside 5'-triphosphate = RNA(n+1) + diphosphate. Its function is as follows. DNA-dependent RNA polymerase catalyzes the transcription of DNA into RNA using the four ribonucleoside triphosphates as substrates. This is DNA-directed RNA polymerase subunit beta' from Emiliania huxleyi (Coccolithophore).